The chain runs to 678 residues: Macrolide export ATP-binding/permease protein MacB 1 (678 aa).

The region spanning L11 to I249 is the ABC transporter domain. Residue G47–S54 participates in ATP binding. 4 helical membrane-spanning segments follow: residues A303 to G323, I558 to V578, L608 to F628, and A641 to F661.

It belongs to the ABC transporter superfamily. Macrolide exporter (TC 3.A.1.122) family. As to quaternary structure, homodimer. Part of the tripartite efflux system MacAB-TolC, which is composed of an inner membrane transporter, MacB, a periplasmic membrane fusion protein, MacA, and an outer membrane component, TolC. The complex forms a large protein conduit and can translocate molecules across both the inner and outer membranes. Interacts with MacA.

The protein resides in the cell inner membrane. In terms of biological role, part of the tripartite efflux system MacAB-TolC. MacB is a non-canonical ABC transporter that contains transmembrane domains (TMD), which form a pore in the inner membrane, and an ATP-binding domain (NBD), which is responsible for energy generation. Confers resistance against macrolides. This is Macrolide export ATP-binding/permease protein MacB 1 from Yersinia pestis bv. Antiqua (strain Nepal516).